We begin with the raw amino-acid sequence, 537 residues long: MFKREEIIEMANKDFEKAWIETKDLIKAKKINESYPRIKPVFGKTHPVNDTIENLRQAYLRMGFEEYINPVIVDERDIYKQFGPEAMAVLDRCFYLAGLPRPDVGLSDEKISQIEKLGIKVSEHKESLQKILHGYKKGTLDGDDLVLEISNALEISSEMGLKILEDVFPEFKDLTAVSSKLTLRSHMTSGWFLTVSDLMNKKPLPFKLFSIDRCFRREQKEDKSHLMTYHSASCAIAGEGVDINDGKAIAEGLLSQFGFTNFKFIPDEKKSKYYTPETQTEVYAYHPKLKEWLEVATFGVYSPVALSKYGIDVPVMNLGLGVERLAMISGNFADVREMVYPQFYEHKLNDRNVASMVKLDKVPVMDEIYDLTKELIESCVKNKDLKSPCELAIEKTFSFGKTKKNVKINIFEKEEGKNLLGPSILNEIYVYDGNVIGIPESFDGVKEEFKDFLEKGKSEGVATGIRYIDALCFKITSKLEEAFVSNTTEFKVKVPIVRSLSDINLKIDDIALKQIMSKNKVIDVRGPVFLNVEVKIE.

Substrate is bound by residues histidine 186–threonine 188, serine 231–serine 233, tyrosine 273–tyrosine 274, and asparagine 317.

It belongs to the class-II aminoacyl-tRNA synthetase family. O-phosphoseryl-tRNA(Cys) synthetase subfamily. As to quaternary structure, homotetramer. Interacts with SepCysS.

It catalyses the reaction tRNA(Cys) + O-phospho-L-serine + ATP = O-phospho-L-seryl-tRNA(Cys) + AMP + diphosphate. Functionally, catalyzes the attachment of O-phosphoserine (Sep) to tRNA(Cys). The chain is O-phosphoserine--tRNA(Cys) ligase from Methanococcus maripaludis (strain DSM 14266 / JCM 13030 / NBRC 101832 / S2 / LL).